The sequence spans 261 residues: tRNA U34 carboxymethyltransferase (261 aa).

Residues Lys-25, Trp-39, Lys-44, Gly-63, 114–115, Tyr-135, and Arg-250 each bind carboxy-S-adenosyl-L-methionine; that span reads VE.

It belongs to the class I-like SAM-binding methyltransferase superfamily. CmoB family. As to quaternary structure, homotetramer.

The catalysed reaction is carboxy-S-adenosyl-L-methionine + 5-hydroxyuridine(34) in tRNA = 5-carboxymethoxyuridine(34) in tRNA + S-adenosyl-L-homocysteine + H(+). Its function is as follows. Catalyzes carboxymethyl transfer from carboxy-S-adenosyl-L-methionine (Cx-SAM) to 5-hydroxyuridine (ho5U) to form 5-carboxymethoxyuridine (cmo5U) at position 34 in tRNAs. The chain is tRNA U34 carboxymethyltransferase from Helicobacter pylori (strain HPAG1).